A 391-amino-acid polypeptide reads, in one-letter code: Putative protein PLEKHA9 (391 aa).

The protein is Putative protein PLEKHA9 (PLEKHA8P1) of Homo sapiens (Human).